We begin with the raw amino-acid sequence, 256 residues long: Enolase-phosphatase E1 (256 aa).

Residues Asp-14 and Glu-16 each coordinate Mg(2+). Residues 142-143 and Lys-176 each bind substrate; that span reads SS. Asp-201 contacts Mg(2+).

This sequence belongs to the HAD-like hydrolase superfamily. MasA/MtnC family. As to quaternary structure, monomer. It depends on Mg(2+) as a cofactor.

It is found in the cytoplasm. The protein resides in the nucleus. It carries out the reaction 5-methylsulfanyl-2,3-dioxopentyl phosphate + H2O = 1,2-dihydroxy-5-(methylsulfanyl)pent-1-en-3-one + phosphate. It functions in the pathway amino-acid biosynthesis; L-methionine biosynthesis via salvage pathway; L-methionine from S-methyl-5-thio-alpha-D-ribose 1-phosphate: step 3/6. The protein operates within amino-acid biosynthesis; L-methionine biosynthesis via salvage pathway; L-methionine from S-methyl-5-thio-alpha-D-ribose 1-phosphate: step 4/6. In terms of biological role, bifunctional enzyme that catalyzes the enolization of 2,3-diketo-5-methylthiopentyl-1-phosphate (DK-MTP-1-P) into the intermediate 2-hydroxy-3-keto-5-methylthiopentenyl-1-phosphate (HK-MTPenyl-1-P), which is then dephosphorylated to form the acireductone 1,2-dihydroxy-3-keto-5-methylthiopentene (DHK-MTPene). The protein is Enolase-phosphatase E1 of Drosophila melanogaster (Fruit fly).